A 341-amino-acid chain; its full sequence is Ketol-acid reductoisomerase (NADP(+)) (341 aa).

The region spanning 1–182 (MATIYYDKDA…GCTRAGVLET (182 aa)) is the KARI N-terminal Rossmann domain. NADP(+) is bound by residues 25-28 (YGSQ), S51, S53, and 83-86 (DQTQ). The active site involves H108. G134 contributes to the NADP(+) binding site. One can recognise a KARI C-terminal knotted domain in the interval 183 to 328 (TFKEETETDL…KRLRDMMSWI (146 aa)). Residues D191, E195, E227, and E231 each coordinate Mg(2+). S252 is a binding site for substrate.

It belongs to the ketol-acid reductoisomerase family. The cofactor is Mg(2+).

The enzyme catalyses (2R)-2,3-dihydroxy-3-methylbutanoate + NADP(+) = (2S)-2-acetolactate + NADPH + H(+). It carries out the reaction (2R,3R)-2,3-dihydroxy-3-methylpentanoate + NADP(+) = (S)-2-ethyl-2-hydroxy-3-oxobutanoate + NADPH + H(+). The protein operates within amino-acid biosynthesis; L-isoleucine biosynthesis; L-isoleucine from 2-oxobutanoate: step 2/4. Its pathway is amino-acid biosynthesis; L-valine biosynthesis; L-valine from pyruvate: step 2/4. In terms of biological role, involved in the biosynthesis of branched-chain amino acids (BCAA). Catalyzes an alkyl-migration followed by a ketol-acid reduction of (S)-2-acetolactate (S2AL) to yield (R)-2,3-dihydroxy-isovalerate. In the isomerase reaction, S2AL is rearranged via a Mg-dependent methyl migration to produce 3-hydroxy-3-methyl-2-ketobutyrate (HMKB). In the reductase reaction, this 2-ketoacid undergoes a metal-dependent reduction by NADPH to yield (R)-2,3-dihydroxy-isovalerate. The polypeptide is Ketol-acid reductoisomerase (NADP(+)) (Anaeromyxobacter sp. (strain K)).